Reading from the N-terminus, the 186-residue chain is Protein FAM219A (186 aa).

Disordered stretches follow at residues 1–47 (MMEE…NYKP) and 59–132 (ELAR…GYSS). Positions 67–81 (KNGTVGSPVNQQPKK) are enriched in polar residues. Over residues 123-132 (SRYSSSGYSS) the composition is skewed to low complexity.

This sequence belongs to the FAM219 family.

The sequence is that of Protein FAM219A (fam219a) from Danio rerio (Zebrafish).